An 834-amino-acid chain; its full sequence is Probable receptor-like protein kinase At2g23200 (834 aa).

The N-terminal stretch at 1-28 (MENFCFQDSVSLFITIMVLVLLPRLSLS) is a signal peptide. Residues 29 to 405 (DTSTYTRPEN…SSSRVHIITG (377 aa)) lie on the Extracellular side of the membrane. Residues Asn61, Asn149, Asn221, Asn246, Asn277, Asn289, Asn314, Asn352, Asn361, and Asn394 are each glycosylated (N-linked (GlcNAc...) asparagine). Residues 406–426 (CAVAAAAASALVFSLLFMVFL) form a helical membrane-spanning segment. The Cytoplasmic segment spans residues 427–834 (KRRRSKKTKP…FSQLKISDAR (408 aa)). Residues 488 to 761 (FDEQLLIGKG…RDVIWDLEYV (274 aa)) enclose the Protein kinase domain. ATP contacts are provided by residues 494–502 (IGKGGFGYV) and Lys516. The active-site Proton acceptor is Asp613.

The protein belongs to the protein kinase superfamily. Ser/Thr protein kinase family.

The protein resides in the membrane. The polypeptide is Probable receptor-like protein kinase At2g23200 (Arabidopsis thaliana (Mouse-ear cress)).